The chain runs to 527 residues: Glucose-6-phosphate isomerase (527 aa).

Residue Glu323 is the Proton donor of the active site. Active-site residues include His352 and Lys454.

Belongs to the GPI family.

It localises to the cytoplasm. The enzyme catalyses alpha-D-glucose 6-phosphate = beta-D-fructose 6-phosphate. It functions in the pathway carbohydrate biosynthesis; gluconeogenesis. Its pathway is carbohydrate degradation; glycolysis; D-glyceraldehyde 3-phosphate and glycerone phosphate from D-glucose: step 2/4. Catalyzes the reversible isomerization of glucose-6-phosphate to fructose-6-phosphate. The sequence is that of Glucose-6-phosphate isomerase from Prochlorococcus marinus (strain MIT 9515).